A 518-amino-acid chain; its full sequence is Nuclear receptor ROR-gamma (518 aa).

A modulating region spans residues M1–P30. 2 consecutive NR C4-type zinc fingers follow at residues C31–C51 and C67–C91. Residues C31 to M96 constitute a DNA-binding region (nuclear receptor). 2 disordered regions span residues R105–G183 and H238–S258. Basic and acidic residues predominate over residues K109 to V118. The segment covering Q119–Q130 has biased composition (low complexity). Residues E269–T508 enclose the NR LBD domain. The AF-2 signature appears at L501–F506.

Belongs to the nuclear hormone receptor family. NR1 subfamily. Interacts (via AF-2 motif) with the coactivator NCOA2 (via LXXLL motif). Interacts with the corepressor NCOR1. Interacts with CRY1. Interacts (via AF-2 motif) with the coactivators NCOA1 and PPARGC1A (via LXXLL motif). Interacts (via AF-2 motif) with PROX1. Interacts with FOXP3. Interacts with NR0B2. In terms of tissue distribution, isoform 1 is widely expressed in many tissues, including liver and adipose, and highly expressed in skeletal muscle. Isoform 2 is primarily expressed in immature thymocytes.

The protein localises to the nucleus. Functionally, nuclear receptor that binds DNA as a monomer to ROR response elements (RORE) containing a single core motif half-site 5'-AGGTCA-3' preceded by a short A-T-rich sequence. Key regulator of cellular differentiation, immunity, peripheral circadian rhythm as well as lipid, steroid, xenobiotics and glucose metabolism. Considered to have intrinsic transcriptional activity, have some natural ligands like oxysterols that act as agonists (25-hydroxycholesterol) or inverse agonists (7-oxygenated sterols), enhancing or repressing the transcriptional activity, respectively. Recruits distinct combinations of cofactors to target gene regulatory regions to modulate their transcriptional expression, depending on the tissue, time and promoter contexts. Regulates the circadian expression of clock genes such as CRY1, BMAL1 and NR1D1 in peripheral tissues and in a tissue-selective manner. Competes with NR1D1 for binding to their shared DNA response element on some clock genes such as BMAL1, CRY1 and NR1D1 itself, resulting in NR1D1-mediated repression or RORC-mediated activation of the expression, leading to the circadian pattern of clock genes expression. Therefore influences the period length and stability of the clock. Involved in the regulation of the rhythmic expression of genes involved in glucose and lipid metabolism, including PLIN2 and AVPR1A. Negative regulator of adipocyte differentiation through the regulation of early phase genes expression, such as MMP3. Controls adipogenesis as well as adipocyte size and modulates insulin sensitivity in obesity. In liver, has specific and redundant functions with RORA as positive or negative modulator of expression of genes encoding phase I and Phase II proteins involved in the metabolism of lipids, steroids and xenobiotics, such as SULT1E1. Also plays a role in the regulation of hepatocyte glucose metabolism through the regulation of G6PC1 and PCK1. Regulates the rhythmic expression of PROX1 and promotes its nuclear localization. Plays an indispensable role in the induction of IFN-gamma dependent anti-mycobacterial systemic immunity. Its function is as follows. Essential for thymopoiesis and the development of several secondary lymphoid tissues, including lymph nodes and Peyer's patches. Required for the generation of LTi (lymphoid tissue inducer) cells. Regulates thymocyte survival through DNA-binding on ROREs of target gene promoter regions and recruitment of coactivaros via the AF-2. Also plays a key role, downstream of IL6 and TGFB and synergistically with RORA, for lineage specification of uncommitted CD4(+) T-helper (T(H)) cells into T(H)17 cells, antagonizing the T(H)1 program. Probably regulates IL17 and IL17F expression on T(H) by binding to the essential enhancer conserved non-coding sequence 2 (CNS2) in the IL17-IL17F locus. May also play a role in the pre-TCR activation cascade leading to the maturation of alpha/beta T-cells and may participate in the regulation of DNA accessibility in the TCR-J(alpha) locus. The sequence is that of Nuclear receptor ROR-gamma (RORC) from Homo sapiens (Human).